Reading from the N-terminus, the 214-residue chain is ATP-dependent Clp protease proteolytic subunit (214 aa).

The Nucleophile role is filled by serine 106. Histidine 131 is a catalytic residue.

Belongs to the peptidase S14 family. Fourteen ClpP subunits assemble into 2 heptameric rings which stack back to back to give a disk-like structure with a central cavity, resembling the structure of eukaryotic proteasomes.

Its subcellular location is the cytoplasm. It carries out the reaction Hydrolysis of proteins to small peptides in the presence of ATP and magnesium. alpha-casein is the usual test substrate. In the absence of ATP, only oligopeptides shorter than five residues are hydrolyzed (such as succinyl-Leu-Tyr-|-NHMec, and Leu-Tyr-Leu-|-Tyr-Trp, in which cleavage of the -Tyr-|-Leu- and -Tyr-|-Trp bonds also occurs).. Functionally, cleaves peptides in various proteins in a process that requires ATP hydrolysis. Has a chymotrypsin-like activity. Plays a major role in the degradation of misfolded proteins. This Rhodopseudomonas palustris (strain BisB5) protein is ATP-dependent Clp protease proteolytic subunit.